Reading from the N-terminus, the 84-residue chain is Toxin BmKaTx13 (84 aa).

Residues 1-19 (MNYLVMISFALLLMKGVES) form the signal peptide. Positions 21–83 (RDAYIAKPEN…VPIRVPGKCH (63 aa)) constitute an LCN-type CS-alpha/beta domain. 4 disulfide bridges follow: cysteine 31/cysteine 82, cysteine 35/cysteine 55, cysteine 41/cysteine 65, and cysteine 45/cysteine 67. Arginine 84 is a propeptide (removed by a carboxypeptidase).

Belongs to the long (4 C-C) scorpion toxin superfamily. Sodium channel inhibitor family. Alpha subfamily. In terms of tissue distribution, expressed by the venom gland.

The protein resides in the secreted. In terms of biological role, alpha toxins bind voltage-independently at site-3 of sodium channels (Nav) and inhibit the inactivation of the activated channels, thereby blocking neuronal transmission. This toxin is active against mammals. The sequence is that of Toxin BmKaTx13 from Olivierus martensii (Manchurian scorpion).